Reading from the N-terminus, the 193-residue chain is Signal peptidase complex catalytic subunit SEC11 (193 aa).

The Cytoplasmic segment spans residues Met1–His16. The chain crosses the membrane as a helical; Signal-anchor for type II membrane protein span at residues Leu17–Ile41. Topologically, residues Thr42 to Glu193 are lumenal. Catalysis depends on charge relay system residues Ser55 and His95. N-linked (GlcNAc...) asparagine glycosylation is present at Asn106. Residue Asp136 is the Charge relay system of the active site. The segment at Gly179–Ile190 is C-terminal short (CTS) helix.

Belongs to the peptidase S26B family. As to quaternary structure, component of the signal peptidase complex (SPC) composed of a catalytic subunit SEC11 and three accessory subunits SPC1, SPC2 and SPC3. The complex induces a local thinning of the ER membrane which is used to measure the length of the signal peptide (SP) h-region of protein substrates. This ensures the selectivity of the complex towards h-regions shorter than 18-20 amino acids. SPC associates with the translocon complex.

The protein localises to the endoplasmic reticulum membrane. The enzyme catalyses Cleavage of hydrophobic, N-terminal signal or leader sequences from secreted and periplasmic proteins.. Functionally, catalytic component of the signal peptidase complex (SPC) which catalyzes the cleavage of N-terminal signal sequences from nascent proteins as they are translocated into the lumen of the endoplasmic reticulum. Specifically cleaves N-terminal signal peptides that contain a hydrophobic alpha-helix (h-region) shorter than 18-20 amino acids. The polypeptide is Signal peptidase complex catalytic subunit SEC11 (SEC11) (Schizophyllum commune (strain H4-8 / FGSC 9210) (Split gill fungus)).